The primary structure comprises 85 residues: Beta-toxin BmKAs1 (85 aa).

A signal peptide spans 1–19; it reads MKIIIFLIVCSFVLIGVKA. One can recognise an LCN-type CS-alpha/beta domain in the interval 20–82; it reads DNGYLLNKYT…LWAYETNKCN (63 aa). 4 disulfide bridges follow: cysteine 31/cysteine 81, cysteine 35/cysteine 56, cysteine 42/cysteine 63, and cysteine 46/cysteine 65.

Belongs to the long (4 C-C) scorpion toxin superfamily. Sodium channel inhibitor family. A possible sulfoxide Met-85 on BmP09 could explain the difference of function between BmK AS-1 and BmP09. Expressed by the venom gland.

It localises to the secreted. Its function is as follows. Beta toxins bind voltage-independently at site-4 of sodium channels (Nav) and shift the voltage of activation toward more negative potentials thereby affecting sodium channel activation and promoting spontaneous and repetitive firing. BmKAs1 also significantly stimulates the binding of [3H]-ryanodine to ryanodine receptors on the sarcoplasmic reticulum of the skeletal muscle. It also displays antinociceptive effect in rat models. Functionally, toxin BmP09 (which may be post-translationally modified) specifically and reversibly blocks large conductance calcium-dependent and voltage-dependent potassium channels (BK) but has no effect on sodium channels. This Olivierus martensii (Manchurian scorpion) protein is Beta-toxin BmKAs1.